Here is a 404-residue protein sequence, read N- to C-terminus: Zinc finger TRAF-type-containing protein 1 (404 aa).

Gly residues predominate over residues 1–13 (MSGAEEAGGGGPA). A disordered region spans residues 1–22 (MSGAEEAGGGGPAAGPAGSVPA). Residues 111 to 156 (CTVCLDLPKASVYQCTNGHLMCAGCFIHLLADARLKEEQATCPNCR) form an RING-type; degenerate zinc finger. The segment at 152–225 (CPNCRCEISK…PWHGPFHELT (74 aa)) adopts a TRAF-type zinc-finger fold.

Belongs to the ZFTRAF1 family. In terms of assembly, interacts with LGALS3.

The protein localises to the cytoplasm. It is found in the perinuclear region. The chain is Zinc finger TRAF-type-containing protein 1 from Homo sapiens (Human).